The chain runs to 154 residues: Myoglobin (154 aa).

The Globin domain maps to 2 to 148 (GLSDGEWQLV…FRNDIAAKYK (147 aa)). At Ser-4 the chain carries Phosphoserine. His-65 provides a ligand contact to nitrite. His-65 serves as a coordination point for O2. Thr-68 is subject to Phosphothreonine. His-94 contributes to the heme b binding site.

Monomer.

The protein localises to the cytoplasm. It localises to the sarcoplasm. It carries out the reaction Fe(III)-heme b-[protein] + nitric oxide + H2O = Fe(II)-heme b-[protein] + nitrite + 2 H(+). It catalyses the reaction H2O2 + AH2 = A + 2 H2O. Functionally, monomeric heme protein which primary function is to store oxygen and facilitate its diffusion within muscle tissues. Reversibly binds oxygen through a pentacoordinated heme iron and enables its timely and efficient release as needed during periods of heightened demand. Depending on the oxidative conditions of tissues and cells, and in addition to its ability to bind oxygen, it also has a nitrite reductase activity whereby it regulates the production of bioactive nitric oxide. Under stress conditions, like hypoxia and anoxia, it also protects cells against reactive oxygen species thanks to its pseudoperoxidase activity. The sequence is that of Myoglobin from Hystrix cristata (North African crested porcupine).